The chain runs to 64 residues: DNA gyrase inhibitor YacG (64 aa).

Positions 9, 12, 28, and 32 each coordinate Zn(2+). Residues 45–64 (KRIPSSGDLSESDDWSEEPK) are disordered. Positions 54-64 (SESDDWSEEPK) are enriched in acidic residues.

Belongs to the DNA gyrase inhibitor YacG family. Interacts with GyrB. Requires Zn(2+) as cofactor.

Its function is as follows. Inhibits all the catalytic activities of DNA gyrase by preventing its interaction with DNA. Acts by binding directly to the C-terminal domain of GyrB, which probably disrupts DNA binding by the gyrase. The chain is DNA gyrase inhibitor YacG from Escherichia fergusonii (strain ATCC 35469 / DSM 13698 / CCUG 18766 / IAM 14443 / JCM 21226 / LMG 7866 / NBRC 102419 / NCTC 12128 / CDC 0568-73).